The chain runs to 333 residues: MGDWGFLEKLLDQVQEHSTVVGKIWLTVLFIFRILILGLAGESVWGDEQSDFECNTAQPGCTNVCYDQAFPISHIRYWVLQFLFVSTPTLVYLGHVIYLSRREERLRQKEGELRALPAKDPQVERALAAVERQMAKISVAEDGRLRIRGALMGTYVASVLCKSVLEAGFLYGQWRLYGWTMEPVFVCQRAPCPYLVDCFVSRPTEKTIFIIFMLVVGLISLVLNLLELVHLLCRCLSRGMRARQGQDAPPTQGTSSDPYTDQVFFYLPVGQGPSSPPCPTYNGLSSSEQNWANLTTEERLASSRPPLFLDPPPQNGQKPPSRPSSSASKKQYV.

Over 1–20 the chain is Cytoplasmic; the sequence is MGDWGFLEKLLDQVQEHSTV. The helical transmembrane segment at 21-40 threads the bilayer; the sequence is VGKIWLTVLFIFRILILGLA. The Extracellular segment spans residues 41–76; sequence GESVWGDEQSDFECNTAQPGCTNVCYDQAFPISHIR. The chain crosses the membrane as a helical span at residues 77 to 99; it reads YWVLQFLFVSTPTLVYLGHVIYL. Topologically, residues 100-148 are cytoplasmic; that stretch reads SRREERLRQKEGELRALPAKDPQVERALAAVERQMAKISVAEDGRLRIR. Residues 149-165 form a helical membrane-spanning segment; sequence GALMGTYVASVLCKSVL. The Extracellular portion of the chain corresponds to 166 to 207; the sequence is EAGFLYGQWRLYGWTMEPVFVCQRAPCPYLVDCFVSRPTEKT. The helical transmembrane segment at 208 to 230 threads the bilayer; the sequence is IFIIFMLVVGLISLVLNLLELVH. Topologically, residues 231–333 are cytoplasmic; it reads LLCRCLSRGM…SSSASKKQYV (103 aa). A disordered region spans residues 292–333; that stretch reads ANLTTEERLASSRPPLFLDPPPQNGQKPPSRPSSSASKKQYV. The span at 323 to 333 shows a compositional bias: low complexity; it reads PSSSASKKQYV.

This sequence belongs to the connexin family. Alpha-type (group II) subfamily. A connexon is composed of a hexamer of connexins. In terms of tissue distribution, expressed in multiple organs and tissues, including heart, uterus, ovary, and blood vessel endothelium.

It localises to the cell membrane. It is found in the cell junction. Its subcellular location is the gap junction. One gap junction consists of a cluster of closely packed pairs of transmembrane channels, the connexons, through which materials of low MW diffuse from one cell to a neighboring cell. The protein is Gap junction alpha-4 protein (GJA4) of Homo sapiens (Human).